Here is a 156-residue protein sequence, read N- to C-terminus: ATP synthase subunit b (156 aa).

The chain crosses the membrane as a helical span at residues 7–27; the sequence is LFLQAVVFAILVWFTMKFVWP.

This sequence belongs to the ATPase B chain family. F-type ATPases have 2 components, F(1) - the catalytic core - and F(0) - the membrane proton channel. F(1) has five subunits: alpha(3), beta(3), gamma(1), delta(1), epsilon(1). F(0) has three main subunits: a(1), b(2) and c(10-14). The alpha and beta chains form an alternating ring which encloses part of the gamma chain. F(1) is attached to F(0) by a central stalk formed by the gamma and epsilon chains, while a peripheral stalk is formed by the delta and b chains.

The protein localises to the cell inner membrane. In terms of biological role, f(1)F(0) ATP synthase produces ATP from ADP in the presence of a proton or sodium gradient. F-type ATPases consist of two structural domains, F(1) containing the extramembraneous catalytic core and F(0) containing the membrane proton channel, linked together by a central stalk and a peripheral stalk. During catalysis, ATP synthesis in the catalytic domain of F(1) is coupled via a rotary mechanism of the central stalk subunits to proton translocation. Its function is as follows. Component of the F(0) channel, it forms part of the peripheral stalk, linking F(1) to F(0). This Polaromonas naphthalenivorans (strain CJ2) protein is ATP synthase subunit b.